The primary structure comprises 61 residues: Small ribosomal subunit protein uS14B (61 aa).

Zn(2+)-binding residues include Cys-24, Cys-27, Cys-40, and Cys-43.

This sequence belongs to the universal ribosomal protein uS14 family. Zinc-binding uS14 subfamily. Part of the 30S ribosomal subunit. Contacts proteins S3 and S10. It depends on Zn(2+) as a cofactor.

Binds 16S rRNA, required for the assembly of 30S particles and may also be responsible for determining the conformation of the 16S rRNA at the A site. The polypeptide is Small ribosomal subunit protein uS14B (Oceanobacillus iheyensis (strain DSM 14371 / CIP 107618 / JCM 11309 / KCTC 3954 / HTE831)).